The primary structure comprises 436 residues: Nicotinate phosphoribosyltransferase (436 aa).

His-231 bears the Phosphohistidine; by autocatalysis mark.

Belongs to the NAPRTase family. Transiently phosphorylated on a His residue during the reaction cycle. Phosphorylation strongly increases the affinity for substrates and increases the rate of nicotinate D-ribonucleotide production. Dephosphorylation regenerates the low-affinity form of the enzyme, leading to product release.

The catalysed reaction is nicotinate + 5-phospho-alpha-D-ribose 1-diphosphate + ATP + H2O = nicotinate beta-D-ribonucleotide + ADP + phosphate + diphosphate. It functions in the pathway cofactor biosynthesis; NAD(+) biosynthesis; nicotinate D-ribonucleotide from nicotinate: step 1/1. Its function is as follows. Catalyzes the synthesis of beta-nicotinate D-ribonucleotide from nicotinate and 5-phospho-D-ribose 1-phosphate at the expense of ATP. The chain is Nicotinate phosphoribosyltransferase from Vibrio parahaemolyticus serotype O3:K6 (strain RIMD 2210633).